The following is a 1164-amino-acid chain: Phytochrome D (1164 aa).

The disordered stretch occupies residues 1–55 (MVSGGGSKTSGGEAASSGHRRSRHTSAAEQAQSSANKALRSQNQQPQNHGGGTES). A compositionally biased stretch (polar residues) spans 25–55 (TSAAEQAQSSANKALRSQNQQPQNHGGGTES). Residues 255–437 (DIKLLCDTVV…AFGLQLNMEL (183 aa)) form the GAF domain. Phytochromobilin is bound at residue Cys360. PAS domains lie at 656–727 (VARE…LKGD) and 790–861 (DYKA…MIVL). Residues 938 to 1157 (YIFQVIKNPL…LIVIELPVPL (220 aa)) enclose the Histidine kinase domain.

Belongs to the phytochrome family. In terms of assembly, homodimer. Post-translationally, contains one covalently linked phytochromobilin chromophore.

In terms of biological role, regulatory photoreceptor which exists in two forms that are reversibly interconvertible by light: the Pr form that absorbs maximally in the red region of the spectrum and the Pfr form that absorbs maximally in the far-red region. Photoconversion of Pr to Pfr induces an array of morphogenic responses, whereas reconversion of Pfr to Pr cancels the induction of those responses. Pfr controls the expression of a number of nuclear genes including those encoding the small subunit of ribulose-bisphosphate carboxylase, chlorophyll A/B binding protein, protochlorophyllide reductase, rRNA, etc. It also controls the expression of its own gene(s) in a negative feedback fashion. The chain is Phytochrome D (PHYD) from Arabidopsis thaliana (Mouse-ear cress).